A 227-amino-acid chain; its full sequence is Cytidylate kinase (227 aa).

12–20 (GPSGVGKGT) is a binding site for ATP.

It belongs to the cytidylate kinase family. Type 1 subfamily.

It localises to the cytoplasm. It catalyses the reaction CMP + ATP = CDP + ADP. It carries out the reaction dCMP + ATP = dCDP + ADP. The protein is Cytidylate kinase of Shewanella denitrificans (strain OS217 / ATCC BAA-1090 / DSM 15013).